A 330-amino-acid polypeptide reads, in one-letter code: Aspartate--ammonia ligase (330 aa).

It belongs to the class-II aminoacyl-tRNA synthetase family. AsnA subfamily.

The protein localises to the cytoplasm. The enzyme catalyses L-aspartate + NH4(+) + ATP = L-asparagine + AMP + diphosphate + H(+). It participates in amino-acid biosynthesis; L-asparagine biosynthesis; L-asparagine from L-aspartate (ammonia route): step 1/1. In Salmonella agona (strain SL483), this protein is Aspartate--ammonia ligase.